A 213-amino-acid chain; its full sequence is Thymidylate kinase (213 aa).

Residue 10–17 participates in ATP binding; it reads GLEGAGKT.

Belongs to the thymidylate kinase family.

It carries out the reaction dTMP + ATP = dTDP + ADP. Phosphorylation of dTMP to form dTDP in both de novo and salvage pathways of dTTP synthesis. The sequence is that of Thymidylate kinase from Salmonella choleraesuis (strain SC-B67).